A 364-amino-acid chain; its full sequence is Dihydroorotate dehydrogenase (quinone) (364 aa).

Residues 62-66 and Thr86 contribute to the FMN site; that span reads AGFDK. Lys66 contacts substrate. 111–115 serves as a coordination point for substrate; that stretch reads NRMGF. Residues Asn142 and Asn175 each contribute to the FMN site. Asn175 lines the substrate pocket. The Nucleophile role is filled by Ser178. Asn180 serves as a coordination point for substrate. The FMN site is built by Lys216 and Thr244. 245 to 246 is a binding site for substrate; it reads NT. FMN-binding positions include Gly267, Gly296, and 317 to 318; that span reads YT.

The protein belongs to the dihydroorotate dehydrogenase family. Type 2 subfamily. In terms of assembly, monomer. FMN is required as a cofactor.

The protein localises to the cell membrane. The catalysed reaction is (S)-dihydroorotate + a quinone = orotate + a quinol. The protein operates within pyrimidine metabolism; UMP biosynthesis via de novo pathway; orotate from (S)-dihydroorotate (quinone route): step 1/1. In terms of biological role, catalyzes the conversion of dihydroorotate to orotate with quinone as electron acceptor. This is Dihydroorotate dehydrogenase (quinone) from Anaeromyxobacter sp. (strain K).